Here is a 328-residue protein sequence, read N- to C-terminus: Phosphatidate cytidylyltransferase (328 aa).

The span at 15-29 shows a compositional bias: polar residues; it reads SGRSATKSVTTNDAG. The disordered stretch occupies residues 15-50; that stretch reads SGRSATKSVTTNDAGTGNPAEQPARGAKQQPATETS. 7 helical membrane-spanning segments follow: residues 58–78, 103–123, 124–144, 173–193, 202–222, 239–259, and 263–283; these read AAIV…VFVP, AGYL…VWLT, WPFG…VCMI, ATVF…MLVY, FCMM…GVLF, GFAG…TFLV, and PWIG…GDLV.

Belongs to the CDS family.

Its subcellular location is the cell membrane. It catalyses the reaction a 1,2-diacyl-sn-glycero-3-phosphate + CTP + H(+) = a CDP-1,2-diacyl-sn-glycerol + diphosphate. The protein operates within phospholipid metabolism; CDP-diacylglycerol biosynthesis; CDP-diacylglycerol from sn-glycerol 3-phosphate: step 3/3. The polypeptide is Phosphatidate cytidylyltransferase (cdsA) (Mycobacterium tuberculosis (strain CDC 1551 / Oshkosh)).